The primary structure comprises 185 residues: Regulator of rDNA transcription protein 13 (185 aa).

WD repeat units lie at residues 9-48, 71-108, and 111-148; these read GHTD…NNGE, GHRA…LKHF, and HTQL…LVRS.

Its function is as follows. May be involved in the modulation of rDNA transcription. The sequence is that of Regulator of rDNA transcription protein 13 (RRT13) from Saccharomyces cerevisiae (strain ATCC 204508 / S288c) (Baker's yeast).